A 702-amino-acid polypeptide reads, in one-letter code: Putative methyltransferase NSUN7 (702 aa).

Cys-424 functions as the Nucleophile in the catalytic mechanism. Disordered regions lie at residues 522 to 541, 567 to 593, and 675 to 702; these read KSSKREKKKKKSKTSLTKAA, ETVTKPSLPQKNTAQVGASSQTRKHKL, and PTPSLSRKGEKPKDDTRSSLLRPPRRWL. Basic residues predominate over residues 523 to 534; it reads SSKREKKKKKSK. The span at 567 to 587 shows a compositional bias: polar residues; it reads ETVTKPSLPQKNTAQVGASSQ. The span at 681–691 shows a compositional bias: basic and acidic residues; sequence RKGEKPKDDTR.

It belongs to the class I-like SAM-binding methyltransferase superfamily. RsmB/NOP family.

Its function is as follows. May have S-adenosyl-L-methionine-dependent methyl-transferase activity. This Macaca fascicularis (Crab-eating macaque) protein is Putative methyltransferase NSUN7 (NSUN7).